Consider the following 276-residue polypeptide: Probable doxorubicin resistance ABC transporter permease protein DrrC (276 aa).

Transmembrane regions (helical) follow at residues 46 to 66 (ITVI…NIVL), 82 to 102 (IVPL…AIDL), 129 to 149 (ILAN…TGVV), 159 to 179 (IPSL…AAMV), 190 to 210 (VVVE…TGLV), and 248 to 268 (MIGM…PLAI). The ABC transmembrane type-2 domain occupies 46–273 (ITVIGAIVLP…VPLAIGYRRA (228 aa)).

This sequence belongs to the ABC-2 integral membrane protein family. As to quaternary structure, the complex is composed of two ATP-binding proteins (DrrA) and two transmembrane proteins (DrrB and DrrC).

It localises to the cell membrane. In terms of biological role, probably part of the ABC transporter complex DrrABC involved in doxorubicin resistance. Probably responsible for the translocation of the substrate across the membrane. This chain is Probable doxorubicin resistance ABC transporter permease protein DrrC (drrC), found in Mycobacterium tuberculosis (strain CDC 1551 / Oshkosh).